We begin with the raw amino-acid sequence, 219 residues long: Eukaryotic translation initiation factor 3 subunit J (219 aa).

Residues 22-40 (VDAWDASSEDEVEKVEEEI) are compositionally biased toward acidic residues. The interval 22–47 (VDAWDASSEDEVEKVEEEIKEPPKPV) is disordered. A coiled-coil region spans residues 48-100 (VKQLTKKQALQRAIELKEKELKEPQGDFDIYLEEKRKKELQEASDLENSKNLF).

It belongs to the eIF-3 subunit J family. Component of the eukaryotic translation initiation factor 3 (eIF-3) complex.

The protein localises to the cytoplasm. Functionally, component of the eukaryotic translation initiation factor 3 (eIF-3) complex, which is involved in protein synthesis of a specialized repertoire of mRNAs and, together with other initiation factors, stimulates binding of mRNA and methionyl-tRNAi to the 40S ribosome. The eIF-3 complex specifically targets and initiates translation of a subset of mRNAs involved in cell proliferation. This Dictyostelium discoideum (Social amoeba) protein is Eukaryotic translation initiation factor 3 subunit J (eif3J).